Reading from the N-terminus, the 550-residue chain is Mitochondrial distribution and morphology protein 34 (550 aa).

Positions 1 to 208 (MAFNFNWSPL…CPEQMSKEDH (208 aa)) constitute an SMP-LTD domain. Disordered stretches follow at residues 294–313 (VDKPEASSTTPLTTPSLVKS), 358–505 (RNAK…ILEQ), and 519–550 (VYDEKQRNPSFWDEREDSPPPAYEAQPTTAAS). The span at 300–310 (SSTTPLTTPSL) shows a compositional bias: low complexity. Residues 364-376 (ANRKKKTRVVNLR) are compositionally biased toward basic residues. 2 stretches are compositionally biased toward polar residues: residues 391-407 (MSDSASVQASESITMSD) and 458-467 (AEISQPQVAR). A compositionally biased stretch (basic and acidic residues) spans 481–495 (SENDKRSDSKRRGPR).

This sequence belongs to the MDM34 family. In terms of assembly, component of the ER-mitochondria encounter structure (ERMES) or MDM complex, composed of MMM1, MDM10, MDM12 and MDM34.

Its subcellular location is the mitochondrion outer membrane. In terms of biological role, component of the ERMES/MDM complex, which serves as a molecular tether to connect the endoplasmic reticulum (ER) and mitochondria. Components of this complex are involved in the control of mitochondrial shape and protein biogenesis, and function in nonvesicular lipid trafficking between the ER and mitochondria. MDM34 is required for the interaction of the ER-resident membrane protein MMM1 and the outer mitochondrial membrane-resident beta-barrel protein MDM10. The chain is Mitochondrial distribution and morphology protein 34 from Pyricularia oryzae (strain 70-15 / ATCC MYA-4617 / FGSC 8958) (Rice blast fungus).